A 597-amino-acid polypeptide reads, in one-letter code: 2-succinyl-5-enolpyruvyl-6-hydroxy-3-cyclohexene-1-carboxylate synthase (597 aa).

Belongs to the TPP enzyme family. MenD subfamily. In terms of assembly, homodimer. Mg(2+) serves as cofactor. It depends on Mn(2+) as a cofactor. Thiamine diphosphate is required as a cofactor.

It carries out the reaction isochorismate + 2-oxoglutarate + H(+) = 5-enolpyruvoyl-6-hydroxy-2-succinyl-cyclohex-3-ene-1-carboxylate + CO2. It participates in quinol/quinone metabolism; 1,4-dihydroxy-2-naphthoate biosynthesis; 1,4-dihydroxy-2-naphthoate from chorismate: step 2/7. Its pathway is cofactor biosynthesis; phylloquinone biosynthesis. Catalyzes the thiamine diphosphate-dependent decarboxylation of 2-oxoglutarate and the subsequent addition of the resulting succinic semialdehyde-thiamine pyrophosphate anion to isochorismate to yield 2-succinyl-5-enolpyruvyl-6-hydroxy-3-cyclohexene-1-carboxylate (SEPHCHC). This chain is 2-succinyl-5-enolpyruvyl-6-hydroxy-3-cyclohexene-1-carboxylate synthase, found in Synechococcus sp. (strain JA-3-3Ab) (Cyanobacteria bacterium Yellowstone A-Prime).